Reading from the N-terminus, the 366-residue chain is 3-dehydroquinate synthase (366 aa).

NAD(+)-binding positions include 75–80 (DGEQYK), 109–113 (GVIGD), 133–134 (TT), lysine 146, lysine 155, and 173–176 (CLST). Residues glutamate 188, histidine 251, and histidine 268 each contribute to the Zn(2+) site.

The protein belongs to the sugar phosphate cyclases superfamily. Dehydroquinate synthase family. The cofactor is Co(2+). Requires Zn(2+) as cofactor. It depends on NAD(+) as a cofactor.

Its subcellular location is the cytoplasm. It carries out the reaction 7-phospho-2-dehydro-3-deoxy-D-arabino-heptonate = 3-dehydroquinate + phosphate. It functions in the pathway metabolic intermediate biosynthesis; chorismate biosynthesis; chorismate from D-erythrose 4-phosphate and phosphoenolpyruvate: step 2/7. Its function is as follows. Catalyzes the conversion of 3-deoxy-D-arabino-heptulosonate 7-phosphate (DAHP) to dehydroquinate (DHQ). The polypeptide is 3-dehydroquinate synthase (Vibrio campbellii (strain ATCC BAA-1116)).